The following is a 462-amino-acid chain: Argininosuccinate lyase (462 aa).

This sequence belongs to the lyase 1 family. Argininosuccinate lyase subfamily.

Its subcellular location is the cytoplasm. The enzyme catalyses 2-(N(omega)-L-arginino)succinate = fumarate + L-arginine. It participates in amino-acid biosynthesis; L-arginine biosynthesis; L-arginine from L-ornithine and carbamoyl phosphate: step 3/3. The protein is Argininosuccinate lyase of Exiguobacterium sp. (strain ATCC BAA-1283 / AT1b).